Here is a 1023-residue protein sequence, read N- to C-terminus: Rho GTPase-activating protein 11A (1023 aa).

The region spanning 49 to 239 (VPFNALPHSA…TLIDYASDIG (191 aa)) is the Rho-GAP domain. Phosphoserine is present on Ser-285. Thr-306 is subject to Phosphothreonine. A phosphoserine mark is found at Ser-316 and Ser-318. Thr-323 carries the post-translational modification Phosphothreonine. 3 positions are modified to phosphoserine: Ser-339, Ser-340, and Ser-484. Thr-508 carries the phosphothreonine modification. The segment at 567 to 589 (TPSNLNNKHNSNITSSPLSGDEN) is disordered. 4 positions are modified to phosphoserine: Ser-582, Ser-585, Ser-638, and Ser-675. Residues 714–734 (KQEFSSDEEIKKQQSPKDKLN) are disordered. Residues 721-734 (EEIKKQQSPKDKLN) are compositionally biased toward basic and acidic residues. At Ser-847 the chain carries Phosphoserine. Residue Thr-866 is modified to Phosphothreonine. Ser-868 is subject to Phosphoserine. The segment at 999–1023 (AWYKGSPKHPIGKTQLLPTSKPVDL) is disordered.

It localises to the nucleus. In terms of biological role, GTPase activator for the Rho-type GTPases by converting them to an inactive GDP-bound state. The polypeptide is Rho GTPase-activating protein 11A (Homo sapiens (Human)).